The primary structure comprises 231 residues: Large ribosomal subunit protein uL1 (231 aa).

The protein belongs to the universal ribosomal protein uL1 family. Part of the 50S ribosomal subunit.

In terms of biological role, binds directly to 23S rRNA. The L1 stalk is quite mobile in the ribosome, and is involved in E site tRNA release. Its function is as follows. Protein L1 is also a translational repressor protein, it controls the translation of the L11 operon by binding to its mRNA. This chain is Large ribosomal subunit protein uL1, found in Nitrosomonas eutropha (strain DSM 101675 / C91 / Nm57).